Here is a 177-residue protein sequence, read N- to C-terminus: Thymidine kinase (177 aa).

11-18 lines the ATP pocket; the sequence is GPMFSGKS. The active-site Proton acceptor is the Glu-83. Phe-113 lines the substrate pocket. Cys-138 and Cys-141 together coordinate Zn(2+). 157–161 is a binding site for substrate; sequence IELIG. Residues Cys-170 and Cys-173 each contribute to the Zn(2+) site.

This sequence belongs to the thymidine kinase family.

The catalysed reaction is thymidine + ATP = dTMP + ADP + H(+). This chain is Thymidine kinase (TK), found in Sheeppox virus (strain KS-1) (SPPV).